Here is a 336-residue protein sequence, read N- to C-terminus: Antigen-presenting glycoprotein CD1d1 (336 aa).

Positions methionine 1–alanine 21 are cleaved as a signal peptide. Residues glutamine 22–glycine 305 lie on the Extracellular side of the membrane. N-linked (GlcNAc...) asparagine glycans are attached at residues asparagine 25, asparagine 38, and asparagine 60. Residue aspartate 98 coordinates a D-galactosylceramide. Intrachain disulfides connect cysteine 122–cysteine 186 and cysteine 226–cysteine 281. A glycan (N-linked (GlcNAc...) asparagine) is linked at asparagine 128. Residue aspartate 171–threonine 174 coordinates a D-galactosylceramide. An N-linked (GlcNAc...) asparagine glycan is attached at asparagine 183. In terms of domain architecture, Ig-like spans proline 207–tryptophan 297. The helical transmembrane segment at leucine 306–tryptophan 326 threads the bilayer. Over arginine 327 to arginine 336 the chain is Cytoplasmic. An Internalization signal motif is present at residues tyrosine 332–isoleucine 335.

In terms of assembly, heterodimer with B2M (beta-2-microglobulin). Interacts with MHC II and CD74. N-glycosylated. As to expression, expressed on cortical thymocytes, on certain T-cell leukemias, and in various other tissues.

Its subcellular location is the cell membrane. The protein resides in the endosome membrane. It localises to the lysosome membrane. Functionally, antigen-presenting protein that binds self and non-self glycolipids and presents them to T-cell receptors on natural killer T-cells. In Mus musculus (Mouse), this protein is Antigen-presenting glycoprotein CD1d1 (Cd1d1).